Reading from the N-terminus, the 517-residue chain is Ribonuclease Y (517 aa).

Residues M1–V21 traverse the membrane as a helical segment. The region spanning L207–D273 is the KH domain. The HD domain maps to A333–A426.

Belongs to the RNase Y family.

Its subcellular location is the cell membrane. Endoribonuclease that initiates mRNA decay. The polypeptide is Ribonuclease Y (Campylobacter jejuni subsp. jejuni serotype O:6 (strain 81116 / NCTC 11828)).